The primary structure comprises 106 residues: U1-lycotoxin-Ls1b (106 aa).

Positions 1–19 (MKVLVVVALLVTLISYSSS) are cleaved as a signal peptide. Residues 20–40 (EGIDDPEADELLSLMANEQTR) constitute a propeptide that is removed on maturation. 4 disulfides stabilise this stretch: Cys-43/Cys-58, Cys-50/Cys-67, Cys-57/Cys-85, and Cys-69/Cys-83.

The protein belongs to the neurotoxin 19 (CSTX) family. 04 (U1-Lctx) subfamily. In terms of tissue distribution, expressed by the venom gland.

It is found in the secreted. The sequence is that of U1-lycotoxin-Ls1b from Lycosa singoriensis (Wolf spider).